The following is a 204-amino-acid chain: Recombination protein RecR (204 aa).

A C4-type zinc finger spans residues Cys-63–Cys-78. In terms of domain architecture, Toprim spans Arg-86–Pro-181.

This sequence belongs to the RecR family.

May play a role in DNA repair. It seems to be involved in an RecBC-independent recombinational process of DNA repair. It may act with RecF and RecO. The chain is Recombination protein RecR from Herpetosiphon aurantiacus (strain ATCC 23779 / DSM 785 / 114-95).